We begin with the raw amino-acid sequence, 385 residues long: Mannitol-1-phosphate 5-dehydrogenase (385 aa).

An NAD(+)-binding site is contributed by 3–14 (ALQFGAGNIGRG).

Belongs to the mannitol dehydrogenase family.

It catalyses the reaction D-mannitol 1-phosphate + NAD(+) = beta-D-fructose 6-phosphate + NADH + H(+). In Buchnera aphidicola subsp. Acyrthosiphon pisum (strain Tuc7), this protein is Mannitol-1-phosphate 5-dehydrogenase.